The sequence spans 592 residues: Pyruvate decarboxylase 3 (592 aa).

Residues Asp-54 and His-141 each contribute to the substrate site. The interval 419-501 (DSWFNCQKLK…FLINNGGYTI (83 aa)) is thiamine pyrophosphate binding. Positions 469, 496, and 498 each coordinate Mg(2+). Position 502 (Glu-502) interacts with substrate.

This sequence belongs to the TPP enzyme family. In terms of assembly, homotetramer. It depends on a metal cation as a cofactor. Thiamine diphosphate serves as cofactor. As to expression, expressed at low levels in roots and shoots.

It carries out the reaction a 2-oxocarboxylate + H(+) = an aldehyde + CO2. This Arabidopsis thaliana (Mouse-ear cress) protein is Pyruvate decarboxylase 3 (PDC3).